Reading from the N-terminus, the 355-residue chain is MPACSVTDIRSHVVEDSLPDQVIKGLKSSPKTLPALLFYSNEGLDHWNHHVSQPDFYPRHQEVDILKQRGDEMARAIAPNSVILDLGSANLEKVVHLLKALEAQGKDVTYFALDISAPQLEVTLNEIPTSEFRHVRFAGLHGTFEDGLRWISETPHICDLPHCVLLLGLTIGNFSRASAATFLGNIASQALRGASKDQSSILMSLDSCKVPTQILRAYTSNGVEPFALQSLTFAKTLLRGPMLHNDSDEPLPCYLQPDDWYYHSEWNFVLGRHEASLIPRYRDVHLGSLLQDITVKKDEKIRFGCSYKYDDMERHQLFLDAGVEQDVAWTNEGCDVVIYELKKRSNTEKLGIDRN.

Belongs to the methyltransferase superfamily. As to quaternary structure, homodimer.

It carries out the reaction 4-(3-methylbut-2-enyl)-L-tryptophan + S-adenosyl-L-methionine = 4-(3-methylbut-2-enyl)-L-abrine + S-adenosyl-L-homocysteine + H(+). It participates in alkaloid biosynthesis; ergot alkaloid biosynthesis. In terms of biological role, 4-dimethylallyltryptophan N-methyltransferase; part of the gene cluster that mediates the biosynthesis of fungal ergot alkaloid. DmaW catalyzes the first step of ergot alkaloid biosynthesis by condensing dimethylallyl diphosphate (DMAP) and tryptophan to form 4-dimethylallyl-L-tryptophan. The second step is catalyzed by the methyltransferase easF that methylates 4-dimethylallyl-L-tryptophan in the presence of S-adenosyl-L-methionine, resulting in the formation of 4-dimethylallyl-L-abrine. The catalase easC and the FAD-dependent oxidoreductase easE then transform 4-dimethylallyl-L-abrine to chanoclavine-I which is further oxidized by easD in the presence of NAD(+), resulting in the formation of chanoclavine-I aldehyde. Agroclavine dehydrogenase easG then mediates the conversion of chanoclavine-I aldehyde to agroclavine via a non-enzymatic adduct reaction: the substrate is an iminium intermediate that is formed spontaneously from chanoclavine-I aldehyde in the presence of glutathione. Further conversion of agroclavine to paspalic acid is a two-step process involving oxidation of agroclavine to elymoclavine and of elymoclavine to paspalic acid, the second step being performed by the elymoclavine oxidase cloA. However, cloA does not encode a functional enzyme indicating that C.fusiformis terminates its ergot alkaloid pathway at elymoclavine. The protein is 4-dimethylallyltryptophan N-methyltransferase easF of Claviceps fusiformis (Ergot fungus).